We begin with the raw amino-acid sequence, 890 residues long: Putative RNA-binding protein 15B (890 aa).

A disordered region spans residues 1 to 133; that stretch reads MKRQSERDSS…AEPACPGSSA (133 aa). A compositionally biased stretch (low complexity) spans 10 to 20; sequence SPSGRGSSSSA. Basic and acidic residues-rich tracts occupy residues 22 to 34 and 66 to 78; these read RPREREREAEAGG and GHRDGRGTGDANH. Residues 86–99 show a composition bias toward gly residues; that stretch reads SGSGAGGGGRGGKA. Phosphoserine occurs at positions 109 and 113. A compositionally biased stretch (pro residues) spans 113–124; sequence SPLPPPPPPPGA. The RRM 1 domain occupies 139–219; that stretch reads KTLLISSLSP…RPLKVEPVYL (81 aa). Lys-213 is covalently cross-linked (Glycyl lysine isopeptide (Lys-Gly) (interchain with G-Cter in SUMO2)). The segment at 219–253 is disordered; that stretch reads LRGGGGSSRRSSSSSAAASTPPPGPPAPADPLGYL. Over residues 226 to 237 the composition is skewed to low complexity; that stretch reads SRRSSSSSAAAS. The segment covering 238–247 has biased composition (pro residues); that stretch reads TPPPGPPAPA. Phosphoserine occurs at positions 265 and 267. RRM domains lie at 337 to 414 and 418 to 492; these read RNLF…YGKA and TRLW…FAKA. A Phosphothreonine modification is found at Thr-532. The tract at residues 547–705 is disordered; sequence EGDWTSPSKS…KPLEEPKHET (159 aa). Phosphoserine occurs at positions 552, 556, and 562. 2 stretches are compositionally biased toward basic and acidic residues: residues 573–616 and 626–646; these read RSGE…ERSR and RGSDRTPERSRKENHSSEGTK. The short motif at 593–597 is the Nuclear localization signal element; sequence RRKRR. Positions 647–657 are enriched in low complexity; that stretch reads ESSSNSLSNSR. The span at 671–703 shows a compositional bias: basic and acidic residues; sequence EAADSSHGKKARDSERNHRTTEAEPKPLEEPKH. Residue Lys-702 forms a Glycyl lysine isopeptide (Lys-Gly) (interchain with G-Cter in SUMO2) linkage. The 179-residue stretch at 711 to 889 folds into the SPOC domain; the sequence is LSEYAQTLQL…HMVIVIVRDT (179 aa). The interval 722-890 is interaction with Epstein-Barr virus BMLF1; sequence WNGLLVLKNS…MVIVIVRDTA (169 aa).

The protein belongs to the RRM Spen family. As to quaternary structure, component of the WMM complex, a N6-methyltransferase complex composed of a catalytic subcomplex, named MAC, and of an associated subcomplex, named MACOM. The MAC subcomplex is composed of METTL3 and METTL14. The MACOM subcomplex is composed of WTAP, ZC3H13, CBLL1/HAKAI, VIRMA, and, in some cases of RBM15 (RBM15 or RBM15B). May interact with NCOR2. Interacts with NXF1, the interaction is required to promote mRNA export. In terms of assembly, (Microbial infection) Interacts (via the SPOC domain) with Epstein-Barr virus BMLF1 (via the N-terminus); the interaction is direct. As to expression, ubiquitously expressed.

The protein localises to the nucleus. The protein resides in the nucleoplasm. It localises to the nucleus speckle. It is found in the nucleus envelope. RNA-binding protein that acts as a key regulator of N6-methyladenosine (m6A) methylation of RNAs, thereby regulating different processes, such as alternative splicing of mRNAs and X chromosome inactivation mediated by Xist RNA. Associated component of the WMM complex, a complex that mediates N6-methyladenosine (m6A) methylation of RNAs, a modification that plays a role in the efficiency of mRNA splicing and RNA processing. Plays a key role in m6A methylation, possibly by binding target RNAs and recruiting the WMM complex. Involved in random X inactivation mediated by Xist RNA: acts by binding Xist RNA and recruiting the WMM complex, which mediates m6A methylation, leading to target YTHDC1 reader on Xist RNA and promoting transcription repression activity of Xist. Functions in the regulation of alternative or illicit splicing, possibly by regulating m6A methylation. Inhibits pre-mRNA splicing. Also functions as a mRNA export factor by acting as a cofactor for the nuclear export receptor NXF1. This Homo sapiens (Human) protein is Putative RNA-binding protein 15B.